A 259-amino-acid chain; its full sequence is Ribosomal RNA small subunit methyltransferase A (259 aa).

Positions 13, 15, 39, 60, 84, and 101 each coordinate S-adenosyl-L-methionine.

The protein belongs to the class I-like SAM-binding methyltransferase superfamily. rRNA adenine N(6)-methyltransferase family. RsmA subfamily.

It localises to the cytoplasm. The catalysed reaction is adenosine(1518)/adenosine(1519) in 16S rRNA + 4 S-adenosyl-L-methionine = N(6)-dimethyladenosine(1518)/N(6)-dimethyladenosine(1519) in 16S rRNA + 4 S-adenosyl-L-homocysteine + 4 H(+). Specifically dimethylates two adjacent adenosines (A1518 and A1519) in the loop of a conserved hairpin near the 3'-end of 16S rRNA in the 30S particle. May play a critical role in biogenesis of 30S subunits. This Mesomycoplasma hyopneumoniae (strain 232) (Mycoplasma hyopneumoniae) protein is Ribosomal RNA small subunit methyltransferase A.